Consider the following 245-residue polypeptide: Acetylglutamate kinase (245 aa).

Substrate contacts are provided by residues G41 to G42, R63, and N156.

It belongs to the acetylglutamate kinase family. ArgB subfamily.

It localises to the cytoplasm. It catalyses the reaction N-acetyl-L-glutamate + ATP = N-acetyl-L-glutamyl 5-phosphate + ADP. It participates in amino-acid biosynthesis; L-arginine biosynthesis; N(2)-acetyl-L-ornithine from L-glutamate: step 2/4. In terms of biological role, catalyzes the ATP-dependent phosphorylation of N-acetyl-L-glutamate. The polypeptide is Acetylglutamate kinase (Streptococcus mutans serotype c (strain ATCC 700610 / UA159)).